A 323-amino-acid polypeptide reads, in one-letter code: Voltage-dependent calcium channel gamma-2 subunit (323 aa).

The chain crosses the membrane as a helical span at residues 10–30; the sequence is MLLTTVGAFAAFSLMTIAVGT. N-linked (GlcNAc...) asparagine glycosylation occurs at Asn-48. The next 3 helical transmembrane spans lie at 104–124, 134–154, and 182–202; these read SSIF…CIAA, IILS…IGII, and FGAL…HMFI. Residues 233–261 are disordered; sequence YQRRSRSSSRSTEPSHSRDASPVGIKGFN. Residue Ser-253 is modified to Phosphoserine. At Tyr-271 the chain carries Phosphotyrosine. Thr-321 is subject to Phosphothreonine.

It belongs to the PMP-22/EMP/MP20 family. CACNG subfamily. The L-type calcium channel is composed of five subunits: alpha-1, alpha-2/delta, beta and gamma. Interacts with the PDZ domains of DLG4/PSD-95 and DLG1/SAP97. May interact with GOPC. Acts as an auxiliary subunit for AMPA-selective glutamate receptors (AMPARs). Found in a complex with GRIA1, GRIA2, GRIA3, GRIA4, CNIH2, CNIH3, CACNG3, CACNG4, CACNG5, CACNG7 and CACNG8. Interacts with GRIA1 and GRIA2. Interacts with MPP2. In terms of processing, phosphorylation of Thr-321 impairs interaction with DLG1 and DLG4. In terms of tissue distribution, brain.

It localises to the membrane. It is found in the synapse. The protein resides in the synaptosome. Functionally, regulates the trafficking and gating properties of AMPA-selective glutamate receptors (AMPARs). Promotes their targeting to the cell membrane and synapses and modulates their gating properties by slowing their rates of activation, deactivation and desensitization. Does not show subunit-specific AMPA receptor regulation and regulates all AMPAR subunits. Thought to stabilize the calcium channel in an inactivated (closed) state. The chain is Voltage-dependent calcium channel gamma-2 subunit (CACNG2) from Homo sapiens (Human).